Reading from the N-terminus, the 260-residue chain is UPF0294 protein YE0917 (260 aa).

This sequence belongs to the UPF0294 family.

Its subcellular location is the cytoplasm. The chain is UPF0294 protein YE0917 from Yersinia enterocolitica serotype O:8 / biotype 1B (strain NCTC 13174 / 8081).